Consider the following 770-residue polypeptide: Jhy protein (770 aa).

Disordered regions lie at residues 1–249, 295–438, 493–527, 595–647, and 708–740; these read MNKY…SKQY, TVQN…SFVS, HRHESPSQRAPQSDHHMNTHRSTKTKKPAKQPQAE, ESQL…KRDV, and DYAKTIPKPKPPNLPDQTAKKTKNSRHSEKEGG. Residues 57 to 71 show a composition bias toward basic and acidic residues; it reads SWSDIKDQIQDKDME. The segment covering 72-85 has biased composition (acidic residues); sequence PDSLEEDSPSETEE. A compositionally biased stretch (basic and acidic residues) spans 112–134; the sequence is HQVEDKYSDLRYDPNWKNKREEG. Residues 218-229 show a composition bias toward low complexity; that stretch reads SGLSQYLKSSSS. Basic and acidic residues predominate over residues 295-314; sequence TVQNDKEVENTFMDPEDKWH. A compositionally biased stretch (polar residues) spans 340-354; the sequence is RGQSSDAANGQQPSR. Positions 355-370 are enriched in basic residues; the sequence is RTAKARVRKQRKHQKG. A compositionally biased stretch (low complexity) spans 383 to 398; that stretch reads QNNQNNPFQQPQNQRQ. Positions 410-438 are enriched in polar residues; the sequence is AQTNASNPNLQDARTLTHNPKVTSDSFVS. Basic and acidic residues predominate over residues 493-509; the sequence is HRHESPSQRAPQSDHHM. Basic residues-rich tracts occupy residues 510–521 and 625–642; these read NTHRSTKTKKPA and GKRHRKRSSTKSSKLKGY.

Expressed in the brain, specifically in hypothalamus, pineal gland, and ependymal cells of the aqueduct of Sylvius, as well as in the choroid plexus of the third ventricle. Expressed in the ependymal cells lining the lateral ventricles (at protein level).

Required for the normal development of cilia in brain ependymal cells lining the ventricular surfaces. The protein is Jhy protein of Mus musculus (Mouse).